The chain runs to 295 residues: Maintenance of mitochondrial morphology protein 1 (295 aa).

Residues 1 to 12 (MVQLFHLTFTQG) are Lumenal-facing. A helical membrane pass occupies residues 13–33 (FFIGQLSVIVIVYIFLRFFLF). Residues 34–295 (CTKEELKNVQ…REGHRQKSTE (262 aa)) lie on the Cytoplasmic side of the membrane. The 198-residue stretch at 81-278 (EEESLDWFNV…SPQFQQISIP (198 aa)) folds into the SMP-LTD domain.

It belongs to the MMM1 family. As to quaternary structure, homodimer. Component of the ER-mitochondria encounter structure (ERMES) or MDM complex, composed of mmm1, mdm10, mdm12 and mdm34. A mmm1 homodimer associates with one molecule of mdm12 on each side in a pairwise head-to-tail manner, and the SMP-LTD domains of mmm1 and mdm12 generate a continuous hydrophobic tunnel for phospholipid trafficking.

Its subcellular location is the endoplasmic reticulum membrane. In terms of biological role, component of the ERMES/MDM complex, which serves as a molecular tether to connect the endoplasmic reticulum (ER) and mitochondria. Components of this complex are involved in the control of mitochondrial shape and protein biogenesis, and function in nonvesicular lipid trafficking between the ER and mitochondria. The mdm12-mmm1 subcomplex functions in the major beta-barrel assembly pathway that is responsible for biogenesis of all outer membrane beta-barrel proteins, and acts in a late step after the SAM complex. The mdm10-mdm12-mmm1 subcomplex further acts in the TOM40-specific pathway after the action of the mdm12-mmm1 complex. Essential for establishing and maintaining the structure of mitochondria and maintenance of mtDNA nucleoids. The chain is Maintenance of mitochondrial morphology protein 1 from Schizosaccharomyces japonicus (strain yFS275 / FY16936) (Fission yeast).